We begin with the raw amino-acid sequence, 385 residues long: Putative transporter YthQ (385 aa).

8 consecutive transmembrane segments (helical) span residues 24–44 (AVID…FVIY), 67–87 (WLYA…FLME), 106–128 (YALL…IVLP), 133–155 (SVLI…HIFF), 176–193 (TLVR…IVFT), 197–214 (LLAL…IRSL), 304–324 (AFTV…LLVY), and 365–385 (ILHY…LLFT).

It localises to the cell membrane. This Bacillus subtilis (strain 168) protein is Putative transporter YthQ (ythQ).